A 365-amino-acid chain; its full sequence is MAVPLPNDSSNAAFSWFTEYQRSCILENGVVPEWFHGIISRKAAEEMLMCKPAGYFLIRVSESRVGYTLSYRAEDRCRHFMINVLPDNQFMIVGEKTVYCSLHDLVAFHRRCPILPYNELLTVACEQGGKTNYVELLFPQKKDVSHRQVEWISSSTATNTLQSNISEENQTSQLQNNSTSHPGRLYPSLETEVSALNIQSTDQPTKPVPKPRTVFASKTPAEETPPQLPPRMRLPSRLQTSTEDRSQGLMPVIPDRQQITPNTPNEGRTQQKNQQQKPVVMSLVHIKKKLKKKRSEDHTYEEIAGGLFQKDATSALESINTNVEGLVENDYQELAEHPISDGIPKSSDRNLPVEYRHPPPFAPGY.

One can recognise an SH2 domain in the interval 34–125 (WFHGIISRKA…PYNELLTVAC (92 aa)). Disordered stretches follow at residues 199–278 (QSTD…QQKP) and 335–365 (AEHP…APGY). A compositionally biased stretch (polar residues) spans 257-277 (QQITPNTPNEGRTQQKNQQQK).

May be an adapter protein involved in tyrosine kinase signaling. This chain is Hematopoietic SH2 domain-containing protein homolog (hsh2d), found in Danio rerio (Zebrafish).